A 121-amino-acid polypeptide reads, in one-letter code: Large ribosomal subunit protein bL12 (121 aa).

This sequence belongs to the bacterial ribosomal protein bL12 family. In terms of assembly, homodimer. Part of the ribosomal stalk of the 50S ribosomal subunit. Forms a multimeric L10(L12)X complex, where L10 forms an elongated spine to which 2 to 4 L12 dimers bind in a sequential fashion. Binds GTP-bound translation factors.

Forms part of the ribosomal stalk which helps the ribosome interact with GTP-bound translation factors. Is thus essential for accurate translation. The protein is Large ribosomal subunit protein bL12 of Vibrio cholerae serotype O1 (strain ATCC 39541 / Classical Ogawa 395 / O395).